The following is a 252-amino-acid chain: 3-dehydroquinate dehydratase (252 aa).

3-dehydroquinate-binding positions include serine 21, 46–48 (EWR), and arginine 82. Histidine 143 acts as the Proton donor/acceptor in catalysis. Residue lysine 170 is the Schiff-base intermediate with substrate of the active site. Arginine 213, serine 232, and glutamine 236 together coordinate 3-dehydroquinate.

Belongs to the type-I 3-dehydroquinase family. Homodimer.

The enzyme catalyses 3-dehydroquinate = 3-dehydroshikimate + H2O. It participates in metabolic intermediate biosynthesis; chorismate biosynthesis; chorismate from D-erythrose 4-phosphate and phosphoenolpyruvate: step 3/7. Involved in the third step of the chorismate pathway, which leads to the biosynthesis of aromatic amino acids. Catalyzes the cis-dehydration of 3-dehydroquinate (DHQ) and introduces the first double bond of the aromatic ring to yield 3-dehydroshikimate. This is 3-dehydroquinate dehydratase from Escherichia coli O8 (strain IAI1).